The chain runs to 444 residues: Orexin receptor type 2 (444 aa).

Residues 1 to 10 are compositionally biased toward basic and acidic residues; that stretch reads MSGTKLEDSP. The interval 1 to 30 is disordered; that stretch reads MSGTKLEDSPPCRNWSSAPELNETQEPFLN. The Extracellular segment spans residues 1–54; the sequence is MSGTKLEDSPPCRNWSSAPELNETQEPFLNPTDYDDEEFLRYLWREYLHPKEYE. N-linked (GlcNAc...) asparagine glycosylation is found at Asn-14 and Asn-22. A compositionally biased stretch (polar residues) spans 14 to 27; it reads NWSSAPELNETQEP. The segment at 33–49 is required for response to orexin-A; it reads DYDDEEFLRYLWREYLH. A helical transmembrane segment spans residues 55 to 75; the sequence is WVLIAGYIIVFVVALIGNVLV. Residues 76-88 lie on the Cytoplasmic side of the membrane; the sequence is CVAVWKNHHMRTV. The chain crosses the membrane as a helical span at residues 89–110; that stretch reads TNYFIVNLSLADVLVTITCLPA. The Extracellular segment spans residues 111 to 127; that stretch reads TLVVDITETWFFGQSLC. Cys-127 and Cys-210 are disulfide-bonded. The chain crosses the membrane as a helical span at residues 128–150; sequence KVIPYLQTVSVSVSVLTLSCIAL. Over 151-170 the chain is Cytoplasmic; that stretch reads DRWYAICHPLMFKSTAKRAR. A helical transmembrane segment spans residues 171 to 191; sequence NSIVIIWIVSCIIMIPQAIVM. Residues 192 to 222 lie on the Extracellular side of the membrane; it reads ECSTMLPGLANKTTLFTVCDERWGGEIYPKM. N-linked (GlcNAc...) asparagine glycosylation is present at Asn-202. The helical transmembrane segment at 223 to 243 threads the bilayer; that stretch reads YHICFFLVTYMAPLCLMVLAY. At 244–304 the chain is on the cytoplasmic side; the sequence is LQIFRKLWCR…QIRARRKTAR (61 aa). Residues 305–326 traverse the membrane as a helical segment; it reads MLMVVLLVFAICYLPISILNVL. Over 327-342 the chain is Extracellular; sequence KRVFGMFTHTEDRETV. Residues 343–366 form a helical membrane-spanning segment; that stretch reads YAWFTFSHWLVYANSAANPIIYNF. At 367 to 444 the chain is on the cytoplasmic side; sequence LSGKFREEFK…ANGAGQLQNW (78 aa).

The protein belongs to the G-protein coupled receptor 1 family.

The protein localises to the cell membrane. Functionally, nonselective, high-affinity receptor for both orexin-A and orexin-B neuropeptides. Triggers an increase in cytoplasmic Ca(2+) levels in response to orexin-A binding. The sequence is that of Orexin receptor type 2 (HCRTR2) from Sus scrofa (Pig).